Consider the following 678-residue polypeptide: AAC-rich mRNA clone AAC4 protein (678 aa).

Residues 55–73 (NNNNNNNNNNNNNNNNNNN) are compositionally biased toward low complexity. Positions 55 to 75 (NNNNNNNNNNNNNNNNNNNTS) are disordered. The chain crosses the membrane as a helical span at residues 243–263 (IIPIYHEIILVLCNWLVVAFY). A compositionally biased stretch (low complexity) spans 318 to 346 (NNNNNNNNNNNNNNNNNNNNNNNNKTNNN). The disordered stretch occupies residues 318-347 (NNNNNNNNNNNNNNNNNNNNNNNNKTNNNQ).

It is found in the membrane. The chain is AAC-rich mRNA clone AAC4 protein (AAC4) from Dictyostelium discoideum (Social amoeba).